The following is a 310-amino-acid chain: Isoaspartyl peptidase/L-asparaginase (310 aa).

Catalysis depends on threonine 167, which acts as the Nucleophile. Residues 195–198 and 218–221 each bind substrate; these read RVGD and TGHG.

Belongs to the Ntn-hydrolase family. In terms of assembly, heterodimer of an alpha and beta chain produced by autocleavage. Cleaved into an alpha and beta chain by autocatalysis; this activates the enzyme. The N-terminal residue of the beta subunit is responsible for the nucleophile hydrolase activity.

Its subcellular location is the cytoplasm. It catalyses the reaction L-asparagine + H2O = L-aspartate + NH4(+). The enzyme catalyses Cleavage of a beta-linked Asp residue from the N-terminus of a polypeptide.. Has both L-asparaginase and beta-aspartyl peptidase activity. Does not have aspartylglucosaminidase activity and is inactive toward GlcNAc-L-Asn. Likewise, has no activity toward glutamine. This chain is Isoaspartyl peptidase/L-asparaginase (asrgl1), found in Danio rerio (Zebrafish).